Consider the following 556-residue polypeptide: Formate--tetrahydrofolate ligase (556 aa).

65-72 (TPAGEGKT) provides a ligand contact to ATP.

Belongs to the formate--tetrahydrofolate ligase family.

The enzyme catalyses (6S)-5,6,7,8-tetrahydrofolate + formate + ATP = (6R)-10-formyltetrahydrofolate + ADP + phosphate. The protein operates within one-carbon metabolism; tetrahydrofolate interconversion. The polypeptide is Formate--tetrahydrofolate ligase (Clostridium cylindrosporum).